The chain runs to 327 residues: 4-hydroxy-2-oxoglutarate aldolase, mitochondrial (327 aa).

The N-terminal 25 residues, 1-25 (MLGPQVWSSVRQGLSRSLSRNVGVW), are a transit peptide targeting the mitochondrion. 77–78 (SN) contacts substrate. Catalysis depends on K196, which acts as the Schiff-base intermediate with substrate. Residues S198 and G222 each coordinate substrate.

This sequence belongs to the DapA family. In terms of assembly, homotetramer.

It localises to the mitochondrion. It carries out the reaction (4S)-4-hydroxy-2-oxoglutarate = glyoxylate + pyruvate. The catalysed reaction is (4R)-4-hydroxy-2-oxoglutarate = glyoxylate + pyruvate. Inhibited by divalent cations. Catalyzes the final step in the metabolic pathway of hydroxyproline. The polypeptide is 4-hydroxy-2-oxoglutarate aldolase, mitochondrial (HOGA1) (Homo sapiens (Human)).